A 173-amino-acid polypeptide reads, in one-letter code: NADH-ubiquinone oxidoreductase chain 6 (173 aa).

Transmembrane regions (helical) follow at residues 1 to 21 (MTYFVIFLGVCFMLGTLAVAS), 27 to 47 (YGVVGLVLASVVGCGWLVNLG), 48 to 68 (VSFVSLVLFMIYLGGMLVVFV), 87 to 107 (VMGYGLGFVLVVCMGMGLGGF), and 139 to 159 (YGVGLFLVAGWGLLLVLFVVL).

This sequence belongs to the complex I subunit 6 family.

Its subcellular location is the mitochondrion membrane. The enzyme catalyses a ubiquinone + NADH + 5 H(+)(in) = a ubiquinol + NAD(+) + 4 H(+)(out). Functionally, core subunit of the mitochondrial membrane respiratory chain NADH dehydrogenase (Complex I) that is believed to belong to the minimal assembly required for catalysis. Complex I functions in the transfer of electrons from NADH to the respiratory chain. The immediate electron acceptor for the enzyme is believed to be ubiquinone. This is NADH-ubiquinone oxidoreductase chain 6 (MT-ND6) from Coturnix japonica (Japanese quail).